Consider the following 234-residue polypeptide: ATP synthase subunit delta, chloroplastic (234 aa).

The transit peptide at 1–47 (MASLQQTLFSLQSKLPPSSFQIARSLPLRKTFPIRINNGGNAAGARM) directs the protein to the chloroplast. The residue at position 48 (serine 48) is an N-acetylserine. Asparagine 66 carries N-linked (GlcNAc...) asparagine glycosylation. Threonine 234 bears the Phosphothreonine mark.

It belongs to the ATPase delta chain family. In terms of assembly, F-type ATPases have 2 components, F(1) - the catalytic core - and F(0) - the membrane proton channel. F(1) has five subunits: alpha(3), beta(3), gamma(1), delta(1), epsilon(1). CF(0) has four main subunits: a(1), b(1), b'(1) and c(10-14). The alpha and beta chains form an alternating ring which encloses part of the gamma chain. F(1) is attached to F(0) by a central stalk formed by the gamma and epsilon chains, while a peripheral stalk is formed by the delta, b and b' chains.

Its subcellular location is the plastid. The protein localises to the chloroplast thylakoid membrane. Its function is as follows. F(1)F(0) ATP synthase produces ATP from ADP in the presence of a proton or sodium gradient. F-type ATPases consist of two structural domains, F(1) containing the extramembraneous catalytic core and F(0) containing the membrane proton channel, linked together by a central stalk and a peripheral stalk. During catalysis, ATP synthesis in the catalytic domain of F(1) is coupled via a rotary mechanism of the central stalk subunits to proton translocation (Potential). Essential for photosynthesis, probably by facilitating electron transport in both photosystems I and II. Functionally, this protein is part of the stalk that links CF(0) to CF(1). It either transmits conformational changes from CF(0) to CF(1) or is implicated in proton conduction. The chain is ATP synthase subunit delta, chloroplastic from Arabidopsis thaliana (Mouse-ear cress).